The chain runs to 130 residues: MADLIFPIAPGAALAIHVALSAGIVAAIIVVATIIREKRAGARPDVPYESGILPGTPPQGPQNAPYFLIAALFVIFDMEAAILFAWAVAARDAGWVGLIEAAIFIGVLLLALIYLWVDGALDWGGPRQRK.

The next 3 helical transmembrane spans lie at Ala15–Ile35, Phe67–Ala87, and Trp95–Leu115.

This sequence belongs to the complex I subunit 3 family. In terms of assembly, NDH-1 is composed of 14 different subunits. Subunits NuoA, H, J, K, L, M, N constitute the membrane sector of the complex.

It is found in the cell inner membrane. It carries out the reaction a quinone + NADH + 5 H(+)(in) = a quinol + NAD(+) + 4 H(+)(out). Functionally, NDH-1 shuttles electrons from NADH, via FMN and iron-sulfur (Fe-S) centers, to quinones in the respiratory chain. The immediate electron acceptor for the enzyme in this species is believed to be ubiquinone. Couples the redox reaction to proton translocation (for every two electrons transferred, four hydrogen ions are translocated across the cytoplasmic membrane), and thus conserves the redox energy in a proton gradient. This chain is NADH-quinone oxidoreductase subunit A, found in Rhodopseudomonas palustris (strain BisA53).